The following is a 517-amino-acid chain: Amidophosphoribosyltransferase (517 aa).

Met-1 is subject to N-acetylmethionine. The propeptide occupies 1-11; it reads MELEESGIREE. Residue Cys-12 is the Nucleophile of the active site. One can recognise a Glutamine amidotransferase type-2 domain in the interval 12–261; the sequence is CGVFGCIASG…PGEIVEISRH (250 aa). Cys-280 is a [4Fe-4S] cluster binding site. The Mg(2+) site is built by Ser-327, Asp-389, and Asp-390. The [4Fe-4S] cluster site is built by Cys-426, Cys-503, and Cys-506.

The protein in the C-terminal section; belongs to the purine/pyrimidine phosphoribosyltransferase family. In terms of assembly, homotetramer. Mg(2+) serves as cofactor. [4Fe-4S] cluster is required as a cofactor. Expressed at a high level in brain, heart, liver and stomach.

The catalysed reaction is 5-phospho-beta-D-ribosylamine + L-glutamate + diphosphate = 5-phospho-alpha-D-ribose 1-diphosphate + L-glutamine + H2O. The protein operates within purine metabolism; IMP biosynthesis via de novo pathway; N(1)-(5-phospho-D-ribosyl)glycinamide from 5-phospho-alpha-D-ribose 1-diphosphate: step 1/2. With respect to regulation, activated by the substrate 5-phospho-alpha-D-ribosyl-1-pyrophosphate and inhibited by the purine ribonucleotides, the end products of purine biosynthesis. Its function is as follows. Catalyzes the formation of phosphoribosylamine from phosphoribosylpyrophosphate (PRPP) and glutamine. This Rattus norvegicus (Rat) protein is Amidophosphoribosyltransferase (Ppat).